We begin with the raw amino-acid sequence, 207 residues long: Thiamine-phosphate synthase (207 aa).

4-amino-2-methyl-5-(diphosphooxymethyl)pyrimidine is bound by residues 41 to 45 and Asn-73; that span reads QLRLK. Asp-74 and Asp-93 together coordinate Mg(2+). A 4-amino-2-methyl-5-(diphosphooxymethyl)pyrimidine-binding site is contributed by Thr-111. Residue 138–140 coordinates 2-[(2R,5Z)-2-carboxy-4-methylthiazol-5(2H)-ylidene]ethyl phosphate; sequence TKT. 4-amino-2-methyl-5-(diphosphooxymethyl)pyrimidine is bound at residue Lys-141. Gly-168 contributes to the 2-[(2R,5Z)-2-carboxy-4-methylthiazol-5(2H)-ylidene]ethyl phosphate binding site.

This sequence belongs to the thiamine-phosphate synthase family. It depends on Mg(2+) as a cofactor.

The enzyme catalyses 2-[(2R,5Z)-2-carboxy-4-methylthiazol-5(2H)-ylidene]ethyl phosphate + 4-amino-2-methyl-5-(diphosphooxymethyl)pyrimidine + 2 H(+) = thiamine phosphate + CO2 + diphosphate. It carries out the reaction 2-(2-carboxy-4-methylthiazol-5-yl)ethyl phosphate + 4-amino-2-methyl-5-(diphosphooxymethyl)pyrimidine + 2 H(+) = thiamine phosphate + CO2 + diphosphate. It catalyses the reaction 4-methyl-5-(2-phosphooxyethyl)-thiazole + 4-amino-2-methyl-5-(diphosphooxymethyl)pyrimidine + H(+) = thiamine phosphate + diphosphate. Its pathway is cofactor biosynthesis; thiamine diphosphate biosynthesis; thiamine phosphate from 4-amino-2-methyl-5-diphosphomethylpyrimidine and 4-methyl-5-(2-phosphoethyl)-thiazole: step 1/1. Its function is as follows. Condenses 4-methyl-5-(beta-hydroxyethyl)thiazole monophosphate (THZ-P) and 2-methyl-4-amino-5-hydroxymethyl pyrimidine pyrophosphate (HMP-PP) to form thiamine monophosphate (TMP). This Pelagibacter ubique (strain HTCC1062) protein is Thiamine-phosphate synthase.